The primary structure comprises 211 residues: N-(5'-phosphoribosyl)anthranilate isomerase (211 aa).

This sequence belongs to the TrpF family.

It carries out the reaction N-(5-phospho-beta-D-ribosyl)anthranilate = 1-(2-carboxyphenylamino)-1-deoxy-D-ribulose 5-phosphate. Its pathway is amino-acid biosynthesis; L-tryptophan biosynthesis; L-tryptophan from chorismate: step 3/5. This Zymomonas mobilis subsp. mobilis (strain ATCC 31821 / ZM4 / CP4) protein is N-(5'-phosphoribosyl)anthranilate isomerase.